The following is a 371-amino-acid chain: uncharacterized protein (371 aa).

The ABC transporter domain maps to 20–250; sequence VTIRNVTKRY…PANIFVAGFI (231 aa). 52–59 contributes to the ATP binding site; sequence GPSGCGKS.

This sequence belongs to the ABC transporter superfamily.

The protein localises to the cell inner membrane. In terms of biological role, probably part of a binding-protein-dependent transport system y4oPQRS. This system probably transports a sugar-like molecule. Probably responsible for energy coupling to the transport system. This is an uncharacterized protein from Sinorhizobium fredii (strain NBRC 101917 / NGR234).